Reading from the N-terminus, the 199-residue chain is 7-methyl-GTP pyrophosphatase (199 aa).

D76 acts as the Proton acceptor in catalysis.

The protein belongs to the Maf family. YceF subfamily. It depends on a divalent metal cation as a cofactor.

The protein resides in the cytoplasm. It carries out the reaction N(7)-methyl-GTP + H2O = N(7)-methyl-GMP + diphosphate + H(+). In terms of biological role, nucleoside triphosphate pyrophosphatase that hydrolyzes 7-methyl-GTP (m(7)GTP). May have a dual role in cell division arrest and in preventing the incorporation of modified nucleotides into cellular nucleic acids. The protein is 7-methyl-GTP pyrophosphatase of Mesorhizobium japonicum (strain LMG 29417 / CECT 9101 / MAFF 303099) (Mesorhizobium loti (strain MAFF 303099)).